A 324-amino-acid chain; its full sequence is NAD(P)H-dependent D-xylose reductase I,II (324 aa).

Tyr-54 (proton donor) is an active-site residue. Residue His-116 participates in substrate binding. NAD(+) contacts are provided by residues 171-172 (SN), 220-229 (SSFGPQSFLE), and 276-286 (KSNNPERLAQN).

Belongs to the aldo/keto reductase family.

It catalyses the reaction xylitol + NAD(+) = D-xylose + NADH + H(+). The catalysed reaction is xylitol + NADP(+) = D-xylose + NADPH + H(+). Its pathway is carbohydrate metabolism; D-xylose degradation. In terms of biological role, reduces D-xylose into xylitol. Has a preference for NADPH, but can also utilize NADH as cosubstrate. In Candida tropicalis (Yeast), this protein is NAD(P)H-dependent D-xylose reductase I,II (xyrA).